The following is a 95-amino-acid chain: Large ribosomal subunit protein bL27 (95 aa).

A propeptide spanning residues 1 to 6 (MILQLF) is cleaved from the precursor.

Belongs to the bacterial ribosomal protein bL27 family. In terms of processing, the N-terminus is cleaved by ribosomal processing cysteine protease Prp.

This is Large ribosomal subunit protein bL27 from Caldanaerobacter subterraneus subsp. tengcongensis (strain DSM 15242 / JCM 11007 / NBRC 100824 / MB4) (Thermoanaerobacter tengcongensis).